A 396-amino-acid chain; its full sequence is NADH-quinone oxidoreductase subunit D (396 aa).

This sequence belongs to the complex I 49 kDa subunit family. As to quaternary structure, NDH-1 is composed of 14 different subunits. Subunits NuoB, C, D, E, F, and G constitute the peripheral sector of the complex.

The protein localises to the cell inner membrane. The enzyme catalyses a quinone + NADH + 5 H(+)(in) = a quinol + NAD(+) + 4 H(+)(out). NDH-1 shuttles electrons from NADH, via FMN and iron-sulfur (Fe-S) centers, to quinones in the respiratory chain. The immediate electron acceptor for the enzyme in this species is believed to be ubiquinone. Couples the redox reaction to proton translocation (for every two electrons transferred, four hydrogen ions are translocated across the cytoplasmic membrane), and thus conserves the redox energy in a proton gradient. The polypeptide is NADH-quinone oxidoreductase subunit D (Methylobacterium radiotolerans (strain ATCC 27329 / DSM 1819 / JCM 2831 / NBRC 15690 / NCIMB 10815 / 0-1)).